The primary structure comprises 144 residues: MSMAYEEYMRQLVVPMRRELTGAGFEELTTAEEVENFMEKAEGTTLVVVNSVCGCAAGLARPAATQAVLQNDKTPDNTVTVFAGQDKEATAKMREYFTGQEPSSPSMALLKGKEVVHFIPRHEIEGHDMEEIMKNLTAAFDAHC.

Catalysis depends on nucleophile residues cysteine 53 and cysteine 55. The residue at position 53 (cysteine 53) is an S-bacillithiol cysteine disulfide. The CXC active site motif signature appears at 53–55; that stretch reads CGC. A disulfide bridge links cysteine 53 with cysteine 55.

The protein belongs to the bacilliredoxin family. In terms of processing, N-terminal Cys of the CXC active site motif can react with bacillithiol (BSH) to form mixed disulfides. S-bacillithiolation protects Cys residues against overoxidation by acting as a redox switch in response to oxidative stress.

Its function is as follows. S-bacillithiolation is the formation of mixed disulfide bonds between protein thiols and the general thiol reductant bacillithiol (BSH) under oxidative stress. BSH is an equivalent of glutathione (GSH) in Firmicutes. This protein is a dithiol bacilliredoxin, which debacillithiolates (removes BSH) the S-bacillithiolated OhrR (OhrR-SSB) in vitro and in vivo NaOCl-generated S-bacillithiolated MetE (MetE-SSB). Involved in maintaining redox homeostasis in response to disulfide stress conditions. Has a redox potential of -130 mV. Displays weak protein disulfide isomerase activity in vitro. The sequence is that of Bacilliredoxin BrxA from Bacillus subtilis (strain 168).